The following is a 293-amino-acid chain: 1D-myo-inositol 2-acetamido-2-deoxy-alpha-D-glucopyranoside deacetylase (293 aa).

Positions 15, 18, and 148 each coordinate Zn(2+).

It belongs to the MshB deacetylase family. Requires Zn(2+) as cofactor.

It carries out the reaction 1D-myo-inositol 2-acetamido-2-deoxy-alpha-D-glucopyranoside + H2O = 1D-myo-inositol 2-amino-2-deoxy-alpha-D-glucopyranoside + acetate. In terms of biological role, catalyzes the deacetylation of 1D-myo-inositol 2-acetamido-2-deoxy-alpha-D-glucopyranoside (GlcNAc-Ins) in the mycothiol biosynthesis pathway. This Corynebacterium diphtheriae (strain ATCC 700971 / NCTC 13129 / Biotype gravis) protein is 1D-myo-inositol 2-acetamido-2-deoxy-alpha-D-glucopyranoside deacetylase.